A 1203-amino-acid polypeptide reads, in one-letter code: Delphilin (1203 aa).

In terms of domain architecture, PDZ 1 spans 1–79; sequence MPATNQGWPE…VPPSLGVLPG (79 aa). A lipid anchor (S-palmitoyl cysteine) is attached at A3. Positions 215-270 are disordered; sequence GAQRLRRSRSEERPERLLVSTRASAAPRRPDEPPPRKATSLLGGRTGPGGPRRTVR. The segment covering 231–241 has biased composition (low complexity); that stretch reads LLVSTRASAAP. Residues 268-345 form the PDZ 2 domain; it reads TVRVYKGNKS…MPTLVVEEGP (78 aa). Residue S303 is modified to Phosphoserine. Disordered regions lie at residues 466-541, 563-586, 611-656, and 710-821; these read ESSL…TPNP, IGTMSKSRASPPVPSLVGTSGPRT, LASP…PPSR, and SFVT…SHMS. The span at 500–509 shows a compositional bias: polar residues; the sequence is RSQGLETSLS. S572, S613, S644, and S647 each carry phosphoserine. Low complexity predominate over residues 611–625; sequence LASPSSSESHPYASL. The segment covering 715 to 740 has biased composition (low complexity); the sequence is ERSSASECVSSSEEGSSLTYSSISDH. A compositionally biased stretch (pro residues) spans 741-756; it reads IPPPPLSPPPPPPLPF. Residues 774-784 show a composition bias toward polar residues; the sequence is QSLTKPLTQIN. A compositionally biased stretch (pro residues) spans 786–803; the sequence is PVPPPPPPPLPPPVPCAP. One can recognise an FH2 domain in the interval 812 to 1203; it reads HRRSETSHMS…SSGMVSPLAW (392 aa).

As to quaternary structure, interacts with C-terminus of the glutamate receptor GRID2 via PDZ domain. Isoform 2 also interacts with Profilin-2/PFN2 and with the monocarboxylate transporter SLC16A7 via PDZ domain. The interaction of isoform 2 with GRID2 is dependent on GRID2 phosphorylation by PKA. In terms of processing, isoform 2 is palmitoylated. Palmitoylation of isoform 2 is necessary for the enhanced cell surface expression of GRID2, and is also responsible for the accumulation of isoform 2 within dendritic spines. Isoform 1 and isoform 2 are differentially localized, probably modulating GRID2 signaling in neurons. In terms of tissue distribution, isoform 1 is expressed in the cerebellum, but not in the cerebral cortex. Isoform 2 is expressed in the cell body of purkinge cells of the cerebellum and weakly expressed in the cerebrum and the brainstem as well as various nuclei of the thalamus. Isoform 2 is highly expressed in the cerebral cortex than in the cerebellum. Isoform 3 is expressed in the cerebellum and cerebrum.

The protein resides in the postsynaptic cell membrane. It is found in the cell projection. It localises to the dendritic spine. The protein localises to the synapse. Its subcellular location is the cell membrane. Postsynaptic scaffolding protein at the Purkinje cell synapse, where it may serve to link GRID2 with actin cytoskeleton and various signaling molecules. This Mus musculus (Mouse) protein is Delphilin (Grid2ip).